The primary structure comprises 434 residues: Elongation factor 1-alpha (434 aa).

The tr-type G domain maps to 5 to 232; the sequence is KPHINLVVIG…DNVHPPKRPV (228 aa). The interval 14–21 is G1; that stretch reads GHVVAGKS. Position 14–21 (14–21) interacts with GTP; sequence GHVVAGKS. The segment at 70 to 74 is G2; it reads GITID. Positions 91-94 are G3; that stretch reads DAPG. Residues 91–95 and 153–156 each bind GTP; these read DAPGH and NKMD. The interval 153–156 is G4; that stretch reads NKMD. The G5 stretch occupies residues 196 to 198; sequence SGF.

It belongs to the TRAFAC class translation factor GTPase superfamily. Classic translation factor GTPase family. EF-Tu/EF-1A subfamily.

Its subcellular location is the cytoplasm. Its function is as follows. This protein promotes the GTP-dependent binding of aminoacyl-tRNA to the A-site of ribosomes during protein biosynthesis. This Blastocystis hominis protein is Elongation factor 1-alpha.